The following is a 605-amino-acid chain: Glycerophosphodiester phosphodiesterase domain-containing protein 5 (605 aa).

Residues 1–42 (MVRHQPLQYYEPQLCLSCLTGIYGCRWKRYQRSHDDTTPWER) lie on the Cytoplasmic side of the membrane. Intrachain disulfides connect C15-C18 and C25-C571. A helical membrane pass occupies residues 43–63 (LWFLLLTFTFGLTLTWLYFWW). The Extracellular portion of the chain corresponds to 64–89 (EVHNDYDEFNWYLYNRMGYWSDWPVP). Residues 90–110 (ILVTTAAAFAYIAGLLVLALC) traverse the membrane as a helical segment. Residues 111 to 125 (HIAVGQQMNLHWLHK) are Cytoplasmic-facing. Residues 126-146 (IGLVVILASTVVAMSAVAQLW) traverse the membrane as a helical segment. The Extracellular portion of the chain corresponds to 147 to 160 (EDEWEVLLISLQGT). A helical membrane pass occupies residues 161–181 (APFLHVGAVAAVTMLSWIVAG). Residues 182-192 (QFARAERTSSQ) lie on the Cytoplasmic side of the membrane. Residues 193–213 (VTILCTFFTVVFALYLAPLTI) traverse the membrane as a helical segment. At 214–496 (SSPCIMEKKD…PLWIMPPDEY (283 aa)) the chain is on the extracellular side. The region spanning 228 to 485 (PALIGHRGAP…DNSHALSQVP (258 aa)) is the GP-PDE domain. Residues N301, N336, N352, N374, and N448 are each glycosylated (N-linked (GlcNAc...) asparagine). The helical transmembrane segment at 497–517 (CLMWVTADLVSFTLIVGIFVL) threads the bilayer. The Cytoplasmic portion of the chain corresponds to 518 to 605 (QKWRLGGIRS…TKTLIERSGR (88 aa)). The disordered stretch occupies residues 582 to 605 (STATPVGPRGGGSHTKTLIERSGR).

The protein belongs to the glycerophosphoryl diester phosphodiesterase family. As to quaternary structure, interacts with PRDX1; forms a mixed-disulfide with PRDX1, leading to disrupt intramolecular disulfide bond between Cys-25 and Cys-571. In terms of processing, intramolecular disulfide bond between Cys-25 and Cys-571 is reduced by PRDX1.

The protein localises to the endomembrane system. Its subcellular location is the cytoplasm. It localises to the perinuclear region. The protein resides in the cell projection. It is found in the growth cone. It carries out the reaction a 1,2-diacyl-sn-glycero-3-phospho-(1D-myo-inositol-4,5-bisphosphate) + H2O = 1D-myo-inositol 1,4,5-trisphosphate + a 1,2-diacyl-sn-glycerol + H(+). It catalyses the reaction sn-glycerol 3-phosphocholine + H2O = sn-glycerol 3-phosphate + choline + H(+). Glycerophosphodiester phosphodiesterase that promotes neurite formation and drives spinal motor neuron differentiation. Mediates the cleavage of glycosylphosphatidylinositol (GPI) anchor of target proteins: removes the GPI-anchor of RECK, leading to release RECK from the plasma membrane. May contribute to the osmotic regulation of cellular glycerophosphocholine. The sequence is that of Glycerophosphodiester phosphodiesterase domain-containing protein 5 from Homo sapiens (Human).